We begin with the raw amino-acid sequence, 309 residues long: Homoserine O-succinyltransferase (309 aa).

Residue Cys142 is the Acyl-thioester intermediate of the active site. Lys163 and Ser192 together coordinate substrate. His235 (proton acceptor) is an active-site residue. The active site involves Glu237. Arg249 serves as a coordination point for substrate.

This sequence belongs to the MetA family.

It is found in the cytoplasm. It catalyses the reaction L-homoserine + succinyl-CoA = O-succinyl-L-homoserine + CoA. It participates in amino-acid biosynthesis; L-methionine biosynthesis via de novo pathway; O-succinyl-L-homoserine from L-homoserine: step 1/1. Its function is as follows. Transfers a succinyl group from succinyl-CoA to L-homoserine, forming succinyl-L-homoserine. The chain is Homoserine O-succinyltransferase from Citrobacter koseri (strain ATCC BAA-895 / CDC 4225-83 / SGSC4696).